A 160-amino-acid polypeptide reads, in one-letter code: MTKKKSHKPGSATIAMNKRARHEYFIEEEFETGLSLQGWEVKSLRAGKANISDSYILLRDGEAFLFGSTFQPLSVASSHIVCDPTRSRKLLLKKRELDTLIGKANRDGYTIVALSMYWKNAWAKLKIGLAKGKKEHDKRDDIKDREWKLDKARIMKHANR.

Belongs to the SmpB family.

It is found in the cytoplasm. In terms of biological role, required for rescue of stalled ribosomes mediated by trans-translation. Binds to transfer-messenger RNA (tmRNA), required for stable association of tmRNA with ribosomes. tmRNA and SmpB together mimic tRNA shape, replacing the anticodon stem-loop with SmpB. tmRNA is encoded by the ssrA gene; the 2 termini fold to resemble tRNA(Ala) and it encodes a 'tag peptide', a short internal open reading frame. During trans-translation Ala-aminoacylated tmRNA acts like a tRNA, entering the A-site of stalled ribosomes, displacing the stalled mRNA. The ribosome then switches to translate the ORF on the tmRNA; the nascent peptide is terminated with the 'tag peptide' encoded by the tmRNA and targeted for degradation. The ribosome is freed to recommence translation, which seems to be the essential function of trans-translation. This chain is SsrA-binding protein, found in Erwinia tasmaniensis (strain DSM 17950 / CFBP 7177 / CIP 109463 / NCPPB 4357 / Et1/99).